A 434-amino-acid chain; its full sequence is MSEYRAVKGTKDIFPDEITSWKYIEGVIHRVVGLYGFQEIRTPVFEYTDLFQRSIGSTTDIVGKEMFSFRPEPDGRSVTLRPEMTAGVMRAFLQANLSSASPVHKLYYIAELFRKERPQAGRQRQFSQFGAEMLGASSPEAVAEVIDMMMQVFTSLGVSGLRLRINTLGDLDDRVRYRDALRAYLEPHSGLLDAPSRERLEKNPLRILDSKNPDIQSVIADAPKLHDFLNPSARAEFDQVLLYLDQKSIEYVIDPLLVRGLDYYCHTAFEVVSPELGAQDAIGGGGRYDGLARELGSKSDIPAVGFAVGMERLLITMEKQGLLRHIVPSGPRVYIVLQNEELKTHALSACDLLRRSGIRTEMDLCGRSMKAQMREANRQHADYALFVGKSEVESQAYGLKNLRTSEQDFLSIREMIARLASSTKHVEVPDGGPD.

The protein belongs to the class-II aminoacyl-tRNA synthetase family. Homodimer.

It is found in the cytoplasm. It catalyses the reaction tRNA(His) + L-histidine + ATP = L-histidyl-tRNA(His) + AMP + diphosphate + H(+). In Chlorobium phaeobacteroides (strain BS1), this protein is Histidine--tRNA ligase.